Consider the following 296-residue polypeptide: tRNA-cytidine(32) 2-sulfurtransferase (296 aa).

A PP-loop motif motif is present at residues 72 to 77 (SGGKDS). [4Fe-4S] cluster-binding residues include Cys147, Cys150, and Cys238.

It belongs to the TtcA family. Homodimer. Requires Mg(2+) as cofactor. It depends on [4Fe-4S] cluster as a cofactor.

The protein localises to the cytoplasm. It carries out the reaction cytidine(32) in tRNA + S-sulfanyl-L-cysteinyl-[cysteine desulfurase] + AH2 + ATP = 2-thiocytidine(32) in tRNA + L-cysteinyl-[cysteine desulfurase] + A + AMP + diphosphate + H(+). It participates in tRNA modification. In terms of biological role, catalyzes the ATP-dependent 2-thiolation of cytidine in position 32 of tRNA, to form 2-thiocytidine (s(2)C32). The sulfur atoms are provided by the cysteine/cysteine desulfurase (IscS) system. The polypeptide is tRNA-cytidine(32) 2-sulfurtransferase (Sinorhizobium fredii (strain NBRC 101917 / NGR234)).